The primary structure comprises 324 residues: Integrin-binding sialoprotein (324 aa).

The signal sequence occupies residues 1-16 (MKTALILLSILGMACA). 5 positions are modified to phosphoserine: Ser-31, Ser-67, Ser-75, Ser-76, and Ser-95. Disordered regions lie at residues 60–228 (VQGG…GREL) and 243–263 (QQTT…RKSS). Residues 66–105 (SSEENGDGDSSEEEGEEEETSNEEENNEDSEGNEDQEAEA) show a composition bias toward acidic residues. Over residues 106-130 (ENSTLSTLSGVTASYGAETTPQAQT) the composition is skewed to polar residues. A glycan (N-linked (GlcNAc...) asparagine) is linked at Asn-107. Residues 141 to 154 (KAGDAESRAPKVKE) are compositionally biased toward basic and acidic residues. A Phosphoserine modification is found at Ser-155. A compositionally biased stretch (acidic residues) spans 155-179 (SDEEEEEEEEEEENENEEAEVDENE). 3 N-linked (GlcNAc...) asparagine glycosylation sites follow: Asn-183, Asn-188, and Asn-196. Acidic residues predominate over residues 203-213 (NGEEAEAEEAS). Polar residues predominate over residues 253-263 (GTTSPPIRKSS). Positions 293–295 (RGD) match the Integrin-binding motif motif. Residues Tyr-320 and Tyr-321 each carry the sulfotyrosine modification.

Monomer. Interacts with integrins; the interaction promotes cell adhesion.

It localises to the secreted. Binds tightly to hydroxyapatite. Appears to form an integral part of the mineralized matrix. Probably important to cell-matrix interaction. Promotes adhesion and migration of various cells via the alpha-V/beta-3 integrin receptor (ITGAV:ITGB3). This chain is Integrin-binding sialoprotein (Ibsp), found in Mus musculus (Mouse).